Reading from the N-terminus, the 306-residue chain is UDP-N-acetylenolpyruvoylglucosamine reductase (306 aa).

The region spanning 34-199 is the FAD-binding PCMH-type domain; it reads RVGGPAQLLF…TSVRLRGAIA (166 aa). R179 is a catalytic residue. S228 serves as the catalytic Proton donor. Residue E298 is part of the active site.

It belongs to the MurB family. It depends on FAD as a cofactor.

The protein localises to the cytoplasm. It catalyses the reaction UDP-N-acetyl-alpha-D-muramate + NADP(+) = UDP-N-acetyl-3-O-(1-carboxyvinyl)-alpha-D-glucosamine + NADPH + H(+). It functions in the pathway cell wall biogenesis; peptidoglycan biosynthesis. Functionally, cell wall formation. The chain is UDP-N-acetylenolpyruvoylglucosamine reductase from Rhodopseudomonas palustris (strain BisA53).